Reading from the N-terminus, the 315-residue chain is Eukaryotic translation initiation factor 2 subunit 1 (315 aa).

Residues 17–88 (EDVVMVNVRS…EKGYIDLSKR (72 aa)) form the S1 motif domain. Phosphoserine occurs at positions 49 and 52. Positions 292 to 315 (RLERENAEVDGDDDAEEMEAKTED) are disordered. A compositionally biased stretch (acidic residues) spans 299–308 (EVDGDDDAEE).

This sequence belongs to the eIF-2-alpha family. In terms of assembly, eukaryotic translation initiation factor 2 eIF2 is a heterotrimeric complex composed of an alpha (EIF2S1), a beta (EIF2S2) and a gamma (EIF2S3) chain. Phosphorylation at Ser-49 and Ser-52 stabilizes the eIF-2/GDP/eIF2B complex and prevents GDP/GTP exchange reaction, thus impairing the recycling of eIF-2 between successive rounds of initiation and leading to global inhibition of translation, while concomitantly initiating the preferential translation of integrated stress response (ISR)-specific mRNAs.

The protein localises to the cytoplasm. It localises to the stress granule. Its subcellular location is the cytosol. Its activity is regulated as follows. Activity is regulated by phosphorylation at Ser-49 and Ser-52, which stabilizes the eIF2/GDP/eIF2B complex and prevents the eIF2B-mediated exchange of GDP for GTP, thereby preventing the formation of the 43S pre-initiation complex (43S PIC). This results in the global attenuation of 5' cap-dependent protein synthesis and concomitant translation of ISR-specific mRNAs that contain a short upstream open reading frame (uORF) in their 5' UTR. Functionally, member of the eIF2 complex that functions in the early steps of protein synthesis by forming a ternary complex with GTP and initiator tRNA. This complex binds to a 40S ribosomal subunit, followed by mRNA binding to form a 43S pre-initiation complex. Junction of the 60S ribosomal subunit to form the 80S initiation complex is preceded by hydrolysis of the GTP bound to eIF2 and release of an eIF2-GDP binary complex. In order for eIF2 to recycle and catalyze another round of initiation, the GDP bound to eIF2 must exchange with GTP by way of a reaction catalyzed by eIF2B. EIF2S1/eIF2-alpha is a key component of the integrated stress response (ISR), required for adaptation to various stress: phosphorylation by metabolic-stress sensing protein kinases (EIF2AK1/HRI, EIF2AK2/PKR, EIF2AK3/PERK and EIF2AK4/GCN2) in response to stress converts EIF2S1/eIF2-alpha in a global protein synthesis inhibitor, leading to a attenuation of cap-dependent translation, while concomitantly initiating the preferential translation of ISR-specific mRNAs, such as the transcriptional activators ATF4 and QRICH1. The protein is Eukaryotic translation initiation factor 2 subunit 1 (EIF2S1) of Gallus gallus (Chicken).